Here is a 668-residue protein sequence, read N- to C-terminus: tRNA 5-methylaminomethyl-2-thiouridine biosynthesis bifunctional protein MnmC (668 aa).

Residues 1–245 (MKHYSIQPAN…KREMLCGVME (245 aa)) are tRNA (mnm(5)s(2)U34)-methyltransferase. The segment at 270–668 (IGGGIACALL…LLKGKAVKAG (399 aa)) is FAD-dependent cmnm(5)s(2)U34 oxidoreductase.

It in the N-terminal section; belongs to the methyltransferase superfamily. tRNA (mnm(5)s(2)U34)-methyltransferase family. In the C-terminal section; belongs to the DAO family. FAD serves as cofactor.

It localises to the cytoplasm. It carries out the reaction 5-aminomethyl-2-thiouridine(34) in tRNA + S-adenosyl-L-methionine = 5-methylaminomethyl-2-thiouridine(34) in tRNA + S-adenosyl-L-homocysteine + H(+). In terms of biological role, catalyzes the last two steps in the biosynthesis of 5-methylaminomethyl-2-thiouridine (mnm(5)s(2)U) at the wobble position (U34) in tRNA. Catalyzes the FAD-dependent demodification of cmnm(5)s(2)U34 to nm(5)s(2)U34, followed by the transfer of a methyl group from S-adenosyl-L-methionine to nm(5)s(2)U34, to form mnm(5)s(2)U34. The protein is tRNA 5-methylaminomethyl-2-thiouridine biosynthesis bifunctional protein MnmC of Shigella boydii serotype 18 (strain CDC 3083-94 / BS512).